The chain runs to 126 residues: Large ribosomal subunit protein bL12 (126 aa).

Positions 104–116 (AKKEDAEKAKAQL) are enriched in basic and acidic residues. A disordered region spans residues 104–126 (AKKEDAEKAKAQLEEAGATVELK). Positions 117–126 (EEAGATVELK) are enriched in low complexity.

The protein belongs to the bacterial ribosomal protein bL12 family. Homodimer. Part of the ribosomal stalk of the 50S ribosomal subunit. Forms a multimeric L10(L12)X complex, where L10 forms an elongated spine to which 2 to 4 L12 dimers bind in a sequential fashion. Binds GTP-bound translation factors.

Its function is as follows. Forms part of the ribosomal stalk which helps the ribosome interact with GTP-bound translation factors. Is thus essential for accurate translation. The chain is Large ribosomal subunit protein bL12 from Bifidobacterium animalis subsp. lactis (strain AD011).